The primary structure comprises 234 residues: Transcriptional activator protein TraR (234 aa).

The 66-residue stretch at 167 to 232 folds into the HTH luxR-type domain; it reads TAEDAAWLDP…HLTALAIRRK (66 aa). Residues 191 to 210 constitute a DNA-binding region (H-T-H motif); it reads MEEIADVEGVKYNSVRVKLR.

It belongs to the autoinducer-regulated transcriptional regulatory protein family.

Its function is as follows. Positive regulation of conjugal transfer of Ti plasmids. TraR activates target genes in the presence of AAI and also activates traR and traI themselves. This is Transcriptional activator protein TraR (traR) from Rhizobium radiobacter (Agrobacterium tumefaciens).